Consider the following 531-residue polypeptide: Plant UBX domain-containing protein 11 (531 aa).

N-acetylmethionine is present on M1. Residues 160–173 (AVASPSTASSVQPS) are compositionally biased toward low complexity. Disordered regions lie at residues 160-316 (AVAS…KASD) and 441-531 (ANAS…NDRR). Composition is skewed to polar residues over residues 174-190 (ETKS…NNDG) and 201-214 (EPSN…NQPA). Residues 290–301 (VDTKETMKPKDE) are compositionally biased toward basic and acidic residues. Residues 312-390 (KKASDVHLNI…RLFDRQALVV (79 aa)) enclose the UBX domain. Polar residues-rich tracts occupy residues 441–478 (ANAS…GRSN) and 486–496 (TSRIGSNIHTL).

As to quaternary structure, interacts with CDC48A.

The sequence is that of Plant UBX domain-containing protein 11 from Arabidopsis thaliana (Mouse-ear cress).